A 338-amino-acid polypeptide reads, in one-letter code: tRNA N6-adenosine threonylcarbamoyltransferase (338 aa).

Fe cation-binding residues include His111 and His115. Residues 134 to 138, Asp167, Gly180, and Asn272 contribute to the substrate site; that span reads LVSGG. Fe cation is bound at residue Asp300.

The protein belongs to the KAE1 / TsaD family. Requires Fe(2+) as cofactor.

Its subcellular location is the cytoplasm. It carries out the reaction L-threonylcarbamoyladenylate + adenosine(37) in tRNA = N(6)-L-threonylcarbamoyladenosine(37) in tRNA + AMP + H(+). Required for the formation of a threonylcarbamoyl group on adenosine at position 37 (t(6)A37) in tRNAs that read codons beginning with adenine. Is involved in the transfer of the threonylcarbamoyl moiety of threonylcarbamoyl-AMP (TC-AMP) to the N6 group of A37, together with TsaE and TsaB. TsaD likely plays a direct catalytic role in this reaction. This chain is tRNA N6-adenosine threonylcarbamoyltransferase, found in Vibrio parahaemolyticus serotype O3:K6 (strain RIMD 2210633).